The following is a 356-amino-acid chain: Tyrosine recombinase XerS (356 aa).

Positions I16–T121 constitute a Core-binding (CB) domain. The region spanning E169–D354 is the Tyr recombinase domain. Catalysis depends on residues R210, K234, H306, R309, and H332. The O-(3'-phospho-DNA)-tyrosine intermediate role is filled by Y341.

This sequence belongs to the 'phage' integrase family. XerS subfamily.

It is found in the cytoplasm. FtsK is required for recombination. Site-specific tyrosine recombinase, which acts by catalyzing the cutting and rejoining of the recombining DNA molecules. Essential to convert dimers of the bacterial chromosome into monomers to permit their segregation at cell division. The protein is Tyrosine recombinase XerS of Streptococcus uberis (strain ATCC BAA-854 / 0140J).